We begin with the raw amino-acid sequence, 528 residues long: Intestinal-type alkaline phosphatase (528 aa).

The first 19 residues, 1-19, serve as a signal peptide directing secretion; the sequence is MQGPWVLLLLGLRLQLSLG. Position 61 (D61) interacts with Mg(2+). Zn(2+)-binding residues include D61 and S111. Residue S111 is the Phosphoserine intermediate of the active site. C140 and C202 are disulfide-bonded. A glycan (N-linked (GlcNAc...) asparagine) is linked at N141. S174 lines the Mg(2+) pocket. A Ca(2+)-binding site is contributed by E235. The N-linked (GlcNAc...) asparagine glycan is linked to N268. Positions 288, 289, and 304 each coordinate Ca(2+). E330 is a binding site for Mg(2+). 4 residues coordinate Zn(2+): D335, H339, D376, and H377. Residue N429 is glycosylated (N-linked (GlcNAc...) asparagine). H451 is a Zn(2+) binding site. Residues C486 and C493 are joined by a disulfide bond. D503 carries the GPI-anchor amidated aspartate lipid modification. The propeptide at 504 to 528 is removed in mature form; it reads AAHPVAASLPLLAGTLLLLGASAAP.

This sequence belongs to the alkaline phosphatase family. As to quaternary structure, homodimer. Mg(2+) serves as cofactor. It depends on Zn(2+) as a cofactor. Requires Ca(2+) as cofactor.

The protein localises to the cell membrane. The catalysed reaction is a phosphate monoester + H2O = an alcohol + phosphate. Alkaline phosphatase that can hydrolyze various phosphate compounds. In Homo sapiens (Human), this protein is Intestinal-type alkaline phosphatase (ALPI).